The sequence spans 283 residues: Pseudokinase OPG198 (283 aa).

2 residues coordinate ATP: Met-1 and Lys-30. Residues 1–283 form the Protein kinase domain; it reads MESFKYCFDN…DRLRRLFIQD (283 aa).

The protein belongs to the protein kinase superfamily. Ser/Thr protein kinase family. Poxviruses subfamily. Interacts with B1/VPK1. Interacts with host VRK1. Interacts with host VRK2.

It localises to the host nucleus. With respect to regulation, both catalytically active kinases B1/VPK1 and host VRK2 repress B12 inhibitory activity in a B1/VPK1 deletion mutant strain. Its function is as follows. Pseudokinase that plays a role in viral DNA replication repression by activating the antiviral protein BANF1 and inhibiting the activity of host VRK1, a cellular modulator of BANF1. The sequence is that of Pseudokinase OPG198 (OPG198) from Homo sapiens (Human).